A 517-amino-acid chain; its full sequence is GTPase Obg (517 aa).

The Obg domain occupies 2–159 (ATFVDTVTLH…GDVVLELKVV (158 aa)). An OBG-type G domain is found at 160-336 (ADVALVGYPS…LSFALAELVK (177 aa)). Residues 166–173 (GYPSAGKS), 191–195 (FTTLH), 212–215 (DVPG), 288–291 (NKID), and 317–319 (STV) contribute to the GTP site. Residues Ser173 and Thr193 each contribute to the Mg(2+) site. An OCT domain is found at 355–439 (PRAVDEKPFT…GDGVVFDWEP (85 aa)). Positions 490 to 517 (EGEAGLWADEDGTGQDGTDEDATTDAKA) are disordered. Residues 497–517 (ADEDGTGQDGTDEDATTDAKA) show a composition bias toward acidic residues.

This sequence belongs to the TRAFAC class OBG-HflX-like GTPase superfamily. OBG GTPase family. As to quaternary structure, monomer. The cofactor is Mg(2+).

It is found in the cytoplasm. In terms of biological role, an essential GTPase which binds GTP, GDP and possibly (p)ppGpp with moderate affinity, with high nucleotide exchange rates and a fairly low GTP hydrolysis rate. Plays a role in control of the cell cycle, stress response, ribosome biogenesis and in those bacteria that undergo differentiation, in morphogenesis control. In Clavibacter sepedonicus (Clavibacter michiganensis subsp. sepedonicus), this protein is GTPase Obg.